Reading from the N-terminus, the 154-residue chain is Interleukin-2 (154 aa).

Positions Met-1–Gly-20 are cleaved as a signal peptide. An O-linked (GalNAc...) threonine glycan is attached at Thr-23. Cys-78 and Cys-126 are joined by a disulfide.

This sequence belongs to the IL-2 family.

It localises to the secreted. Functionally, cytokine produced by activated CD4-positive helper T-cells and to a lesser extend activated CD8-positive T-cells and natural killer (NK) cells that plays pivotal roles in the immune response and tolerance. Binds to a receptor complex composed of either the high-affinity trimeric IL-2R (IL2RA/CD25, IL2RB/CD122 and IL2RG/CD132) or the low-affinity dimeric IL-2R (IL2RB and IL2RG). Interaction with the receptor leads to oligomerization and conformation changes in the IL-2R subunits resulting in downstream signaling starting with phosphorylation of JAK1 and JAK3. In turn, JAK1 and JAK3 phosphorylate the receptor to form a docking site leading to the phosphorylation of several substrates including STAT5. This process leads to activation of several pathways including STAT, phosphoinositide-3-kinase/PI3K and mitogen-activated protein kinase/MAPK pathways. Functions as a T-cell growth factor and can increase NK-cell cytolytic activity as well. Promotes strong proliferation of activated B-cells and subsequently immunoglobulin production. Plays a pivotal role in regulating the adaptive immune system by controlling the survival and proliferation of regulatory T-cells, which are required for the maintenance of immune tolerance. Moreover, participates in the differentiation and homeostasis of effector T-cell subsets, including Th1, Th2, Th17 as well as memory CD8-positive T-cells. This is Interleukin-2 (IL2) from Delphinapterus leucas (Beluga whale).